A 486-amino-acid polypeptide reads, in one-letter code: GDP-Man:Man(3)GlcNAc(2)-PP-Dol alpha-1,2-mannosyltransferase (486 aa).

Residues 1 to 16 lie on the Lumenal side of the membrane; it reads MAGPMCLCGMMRLLTA. A helical membrane pass occupies residues 17 to 37; that stretch reads LFIPVLITSVGLCLIFVLLFI. The Cytoplasmic portion of the chain corresponds to 38–229; the sequence is CTRLWVQRKK…SNNPVLSRLK (192 aa). Positions 230-250 form an intramembrane region, helical; it reads LIYYYLFALFYGWVGSCSDVI. The Cytoplasmic segment spans residues 251 to 393; it reads MVNSTWTFSH…IGLHTMWNEH (143 aa). An intramembrane region (helical) is located at residues 394 to 414; that stretch reads FGIGIVECMAAGTIILAHNSG. Residues 415–486 are Cytoplasmic-facing; it reads GPKLDIVVPH…FLASSEPLFK (72 aa).

Belongs to the glycosyltransferase group 1 family. Glycosyltransferase 4 subfamily.

It is found in the endoplasmic reticulum membrane. The enzyme catalyses an alpha-D-Man-(1-&gt;3)-[alpha-D-Man-(1-&gt;6)]-beta-D-Man-(1-&gt;4)-beta-D-GlcNAc-(1-&gt;4)-alpha-D-GlcNAc-diphospho-di-trans,poly-cis-dolichol + 2 GDP-alpha-D-mannose = an alpha-D-Man-(1-&gt;2)-alpha-D-Man-(1-&gt;2)-alpha-D-Man-(1-&gt;3)-[alpha-D-Man-(1-&gt;6)]-beta-D-Man-(1-&gt;4)-beta-D-GlcNAc-(1-&gt;4)-alpha-D-GlcNAc-diphospho-di-trans,poly-cis-dolichol + 2 GDP + 2 H(+). Its pathway is protein modification; protein glycosylation. Its function is as follows. GDP-Man:Man(3)GlcNAc(2)-PP-Dol alpha-1,2-mannosyltransferase that operates in the biosynthetic pathway of dolichol-linked oligosaccharides, the glycan precursors employed in protein asparagine (N)-glycosylation. The assembly of dolichol-linked oligosaccharides begins on the cytosolic side of the endoplasmic reticulum membrane and finishes in its lumen. The sequential addition of sugars to dolichol pyrophosphate produces dolichol-linked oligosaccharides containing fourteen sugars, including two GlcNAcs, nine mannoses and three glucoses. Once assembled, the oligosaccharide is transferred from the lipid to nascent proteins by oligosaccharyltransferases. Catalyzes, on the cytoplasmic face of the endoplasmic reticulum, the addition of the fourth and fifth mannose residues to the dolichol-linked oligosaccharide chain, to produce Man(5)GlcNAc(2)-PP-dolichol core oligosaccharide. Man(5)GlcNAc(2)-PP-dolichol is a substrate for ALG3, the following enzyme in the biosynthetic pathway. In Xenopus laevis (African clawed frog), this protein is GDP-Man:Man(3)GlcNAc(2)-PP-Dol alpha-1,2-mannosyltransferase (alg11).